Here is a 72-residue protein sequence, read N- to C-terminus: Cytochrome b-c1 complex subunit 8 (72 aa).

The Mitochondrial matrix portion of the chain corresponds to 2 to 41; it reads GKQPVKLKAVVYAISPFQQKIMPGLWKDLPGKIHHKVSEN. The chain crosses the membrane as a helical span at residues 42 to 59; sequence WISATLLLGPLVGTYSYV. Topologically, residues 60–72 are mitochondrial intermembrane; it reads QHFLEKEKLEHRY.

It belongs to the UQCRQ/QCR8 family. Component of the ubiquinol-cytochrome c oxidoreductase (cytochrome b-c1 complex, complex III, CIII), a multisubunit enzyme composed of 3 respiratory subunits cytochrome b, cytochrome c1 and Rieske protein, 2 core protein subunits, and additional low-molecular weight protein subunits. The complex exists as an obligatory dimer and forms supercomplexes (SCs) in the inner mitochondrial membrane with cytochrome c oxidase (complex IV, CIV).

The protein resides in the mitochondrion inner membrane. Component of the ubiquinol-cytochrome c oxidoreductase, a multisubunit transmembrane complex that is part of the mitochondrial electron transport chain which drives oxidative phosphorylation. The respiratory chain contains 3 multisubunit complexes succinate dehydrogenase (complex II, CII), ubiquinol-cytochrome c oxidoreductase (cytochrome b-c1 complex, complex III, CIII) and cytochrome c oxidase (complex IV, CIV), that cooperate to transfer electrons derived from NADH and succinate to molecular oxygen, creating an electrochemical gradient over the inner membrane that drives transmembrane transport and the ATP synthase. The cytochrome b-c1 complex catalyzes electron transfer from ubiquinol to cytochrome c, linking this redox reaction to translocation of protons across the mitochondrial inner membrane, with protons being carried across the membrane as hydrogens on the quinol. In the process called Q cycle, 2 protons are consumed from the matrix, 4 protons are released into the intermembrane space and 2 electrons are passed to cytochrome c. The chain is Cytochrome b-c1 complex subunit 8 from Solanum tuberosum (Potato).